The sequence spans 390 residues: Chaperone protein DnaJ (390 aa).

One can recognise a J domain in the interval 6–70 (DYYEILGVPR…QKRAQYDQFG (65 aa)). A CR-type zinc finger spans residues 146–228 (GSEKEIYVTR…CHGTGKVRRK (83 aa)). Zn(2+) contacts are provided by Cys159, Cys162, Cys176, Cys179, Cys202, Cys205, Cys216, and Cys219. CXXCXGXG motif repeat units follow at residues 159–166 (CPTCKGKG), 176–183 (CDMCNGTG), 202–209 (CPKCHGTG), and 216–223 (CHECHGTG).

It belongs to the DnaJ family. Homodimer. Zn(2+) serves as cofactor.

The protein resides in the cytoplasm. Its function is as follows. Participates actively in the response to hyperosmotic and heat shock by preventing the aggregation of stress-denatured proteins and by disaggregating proteins, also in an autonomous, DnaK-independent fashion. Unfolded proteins bind initially to DnaJ; upon interaction with the DnaJ-bound protein, DnaK hydrolyzes its bound ATP, resulting in the formation of a stable complex. GrpE releases ADP from DnaK; ATP binding to DnaK triggers the release of the substrate protein, thus completing the reaction cycle. Several rounds of ATP-dependent interactions between DnaJ, DnaK and GrpE are required for fully efficient folding. Also involved, together with DnaK and GrpE, in the DNA replication of plasmids through activation of initiation proteins. The protein is Chaperone protein DnaJ of Dictyoglomus thermophilum (strain ATCC 35947 / DSM 3960 / H-6-12).